We begin with the raw amino-acid sequence, 234 residues long: Proteasome subunit beta (234 aa).

The tract at residues 1–35 (MNPDLNMNPHDSGRTDPYAPELGEIATDEGDGENV) is disordered. Residues 1 to 39 (MNPDLNMNPHDSGRTDPYAPELGEIATDEGDGENVTKTG) constitute a propeptide, removed in mature form; by autocatalysis. The Nucleophile role is filled by threonine 40.

The protein belongs to the peptidase T1B family. In terms of assembly, the 20S proteasome core is composed of 14 alpha and 14 beta subunits that assemble into four stacked heptameric rings, resulting in a barrel-shaped structure. The two inner rings, each composed of seven catalytic beta subunits, are sandwiched by two outer rings, each composed of seven alpha subunits. The catalytic chamber with the active sites is on the inside of the barrel. Has a gated structure, the ends of the cylinder being occluded by the N-termini of the alpha-subunits. Is capped at one or both ends by the proteasome regulatory ATPase, PAN.

Its subcellular location is the cytoplasm. The catalysed reaction is Cleavage of peptide bonds with very broad specificity.. With respect to regulation, the formation of the proteasomal ATPase PAN-20S proteasome complex, via the docking of the C-termini of PAN into the intersubunit pockets in the alpha-rings, triggers opening of the gate for substrate entry. Interconversion between the open-gate and close-gate conformations leads to a dynamic regulation of the 20S proteasome proteolysis activity. Functionally, component of the proteasome core, a large protease complex with broad specificity involved in protein degradation. This chain is Proteasome subunit beta, found in Halorhabdus utahensis (strain DSM 12940 / JCM 11049 / AX-2).